Reading from the N-terminus, the 118-residue chain is Large ribosomal subunit protein bL20 (118 aa).

The protein belongs to the bacterial ribosomal protein bL20 family.

Functionally, binds directly to 23S ribosomal RNA and is necessary for the in vitro assembly process of the 50S ribosomal subunit. It is not involved in the protein synthesizing functions of that subunit. This Bacillus mycoides (strain KBAB4) (Bacillus weihenstephanensis) protein is Large ribosomal subunit protein bL20.